The sequence spans 237 residues: MRPSERTANQIRPVTFTRNYTLHAEGSVLVEFGNTKVLCTATVESGVPRFMKGQGKGWINAEYGMLPRATHTRNAREAARGKQGGRTMEIQRLIARALRAAVDLKALGENTITIDCDVIQADGGTRTASISGACVALVDALTHMRAKGMINSNPLKYMIAAISVGIYKGQAISDLEYIEDSAAETDMNVILTETGKIIEIQGTAEGEPFSFDELDELLTLAKHSIREIIDVQKQALA.

Residues Arg86 and 124-126 (GTR) contribute to the phosphate site.

This sequence belongs to the RNase PH family. In terms of assembly, homohexameric ring arranged as a trimer of dimers.

It catalyses the reaction tRNA(n+1) + phosphate = tRNA(n) + a ribonucleoside 5'-diphosphate. Functionally, phosphorolytic 3'-5' exoribonuclease that plays an important role in tRNA 3'-end maturation. Removes nucleotide residues following the 3'-CCA terminus of tRNAs; can also add nucleotides to the ends of RNA molecules by using nucleoside diphosphates as substrates, but this may not be physiologically important. Probably plays a role in initiation of 16S rRNA degradation (leading to ribosome degradation) during starvation. In Pseudoalteromonas translucida (strain TAC 125), this protein is Ribonuclease PH.